Consider the following 103-residue polypeptide: c-Myc-binding protein (103 aa).

Belongs to the AMY1 family. Binds via its C-terminal region to the N-terminal region of MYC. Associates with AKAP1/S-AKAP84. Interacts with MYCBPAP. Interacts with CFAP91. As to expression, highly expressed in heart, placenta, pancreas, skeletal muscle and kidney. Also present at low levels in lung.

Its subcellular location is the cytoplasm. The protein localises to the nucleus. It is found in the mitochondrion. Its function is as follows. May control the transcriptional activity of MYC. Stimulates the activation of E box-dependent transcription by MYC. In Homo sapiens (Human), this protein is c-Myc-binding protein.